The sequence spans 110 residues: MSETRAVLRGVRLSVDKGRLVADLIRGKKVDQALNVLQFTQKKAAVIIKKVLESAIANAEHNDGADIDELKVKTIYVEQGATLKRFTARAKGRGNRISKPTCHVYVTVGN.

It belongs to the universal ribosomal protein uL22 family. In terms of assembly, part of the 50S ribosomal subunit.

Functionally, this protein binds specifically to 23S rRNA; its binding is stimulated by other ribosomal proteins, e.g. L4, L17, and L20. It is important during the early stages of 50S assembly. It makes multiple contacts with different domains of the 23S rRNA in the assembled 50S subunit and ribosome. Its function is as follows. The globular domain of the protein is located near the polypeptide exit tunnel on the outside of the subunit, while an extended beta-hairpin is found that lines the wall of the exit tunnel in the center of the 70S ribosome. The sequence is that of Large ribosomal subunit protein uL22 from Variovorax paradoxus (strain S110).